A 155-amino-acid polypeptide reads, in one-letter code: Endoribonuclease YbeY (155 aa).

Zn(2+)-binding residues include His114, His118, and His124.

This sequence belongs to the endoribonuclease YbeY family. Zn(2+) is required as a cofactor.

Its subcellular location is the cytoplasm. Single strand-specific metallo-endoribonuclease involved in late-stage 70S ribosome quality control and in maturation of the 3' terminus of the 16S rRNA. This Enterobacter sp. (strain 638) protein is Endoribonuclease YbeY.